Reading from the N-terminus, the 223-residue chain is Exosome complex component RRP46 (223 aa).

It belongs to the RNase PH family. As to quaternary structure, component of the RNA exosome complex. Specifically part of the catalytically inactive RNA exosome core complex (Exo-9) which may associate with the catalytic subunits RRP6 and DIS3 in cytoplasmic- and nuclear-specific RNA exosome complex forms. Exo-9 is formed by a hexameric base ring of RNase PH domain-containing subunits and a cap ring consisting of CSL4, RRP4 and RRP40.

It localises to the cytoplasm. The protein resides in the nucleus. It is found in the nucleolus. Its function is as follows. Non-catalytic component of the RNA exosome complex which has 3'-&gt;5' exoribonuclease activity and participates in a multitude of cellular RNA processing and degradation events. In the nucleus, the RNA exosome complex is involved in proper maturation of stable RNA species such as rRNA, snRNA and snoRNA, in the elimination of RNA processing by-products and non-coding 'pervasive' transcripts, such as antisense RNA species and cryptic unstable transcripts (CUTs), and of mRNAs with processing defects, thereby limiting or excluding their export to the cytoplasm. In the cytoplasm, the RNA exosome complex is involved in general mRNA turnover and in RNA surveillance pathways, preventing translation of aberrant mRNAs. The catalytic inactive RNA exosome core complex of 9 subunits (Exo-9) is proposed to play a pivotal role in the binding and presentation of RNA for ribonucleolysis, and to serve as a scaffold for the association with catalytic subunits and accessory proteins or complexes. RRP46 is part of the hexameric ring of RNase PH domain-containing subunits proposed to form a central channel which threads RNA substrates for degradation. This is Exosome complex component RRP46 (RRP46) from Saccharomyces cerevisiae (strain ATCC 204508 / S288c) (Baker's yeast).